A 178-amino-acid chain; its full sequence is Deoxycytidylate deaminase (178 aa).

Residues 14 to 145 (EWPEYFMAVA…DEATAARLLF (132 aa)) enclose the CMP/dCMP-type deaminase domain. His-84 is a binding site for Zn(2+). Glu-86 functions as the Proton donor in the catalytic mechanism. The Zn(2+) site is built by Cys-110 and Cys-113. Ser-174 bears the Phosphoserine mark.

It belongs to the cytidine and deoxycytidylate deaminase family. Homohexamer. Requires Zn(2+) as cofactor.

The catalysed reaction is dCMP + H2O + H(+) = dUMP + NH4(+). It carries out the reaction 5-hydroxymethyl-dCMP + H2O + H(+) = 5-hydroxymethyl-dUMP + NH4(+). With respect to regulation, allosteric enzyme whose activity is greatly influenced by the end products of its metabolic pathway, dCTP and dTTP. Its function is as follows. Catalyzes the deamination of dCMP to dUMP, providing the nucleoside monophosphate substrate for the thymidylate synthase/TYMS. Also, part of a nucleotide salvage pathway that eliminates epigenetically modified 5-hydroxymethyl-dCMP (hmdCMP) in a two-step process entailing deamination to cytotoxic 5-hydroxymethyl-dUMP (hmdUMP), followed by its hydrolysis into 5-hydroxymethyluracil (hmU) and 2-deoxy-D-ribose 5-phosphate (deoxyribosephosphate). Catalyzes the first step in that pathway, the deamination of 5-hydroxymethyl-dCMP (hmdCMP). The protein is Deoxycytidylate deaminase of Homo sapiens (Human).